Here is a 359-residue protein sequence, read N- to C-terminus: DNA-directed RNA polymerase RPB3-11 homolog (359 aa).

In the N-terminal section; belongs to the archaeal RpoD/eukaryotic RPB3 RNA polymerase subunit family. This sequence in the C-terminal section; belongs to the archaeal RpoL/eukaryotic RPB11/RPC19 RNA polymerase subunit family. Part of the viral DNA-directed RNA polymerase that consists of 8 polII-like subunits (RPB1, RPB2, RPB3, RPB5, RPB6, RPB7, RPB9, RPB10), a capping enzyme and a termination factor.

It localises to the host cytoplasm. The protein resides in the virion. Functionally, component of the DNA-directed RNA polymerase (RNAP) that catalyzes the transcription in the cytoplasm of viral DNA into RNA using the four ribonucleoside triphosphates as substrates. This Ornithodoros (relapsing fever ticks) protein is DNA-directed RNA polymerase RPB3-11 homolog.